Consider the following 150-residue polypeptide: uncharacterized protein (150 aa).

The span at 81–90 (TTKPSCSFAQ) shows a compositional bias: polar residues. The segment at 81–125 (TTKPSCSFAQPVTPRTREGAGVRGHRRRRRGSLSLIPWKTSNDKQ) is disordered.

This is an uncharacterized protein from Homo sapiens (Human).